The chain runs to 450 residues: Keratin, type I cytoskeletal 25 (450 aa).

The segment covering 1-11 (MSLRLSSASRR) has biased composition (low complexity). Residues 1 to 20 (MSLRLSSASRRSCPRPTTGS) form a disordered region. Positions 1–78 (MSLRLSSASR…VNERGLLSGN (78 aa)) are head. A coil 1A region spans residues 79–114 (EKVTMQNLNDRLASYLDSVHALEEANADLEQKIKGW). Positions 79–394 (EKVTMQNLND…LLIGGDDGAC (316 aa)) constitute an IF rod domain. The interval 115 to 136 (YEKFGPGSCRGLDHDYSRYFPI) is linker 1. The tract at residues 137-228 (IDDLKNQIIA…KNHKEEMQVL (92 aa)) is coil 1B. A linker 12 region spans residues 229 to 251 (QCAAGGNVNVEMNAAPGVDLTVL). A coil 2 region spans residues 252–390 (LNNMRAEYEA…ETYCLLIGGD (139 aa)). The tract at residues 391 to 450 (DGACKSGGYKSKDYGSGNVGSQVKDPAKAIVVKKVLEEVDQRSKILTTRLHSLEEKSQSN) is tail. The residue at position 442 (S442) is a Phosphoserine.

Belongs to the intermediate filament family. Heterodimer of a type I and a type II keratin. Heterodimer with type II keratin KRT5 leading to the formation of keratin intermediate filament (KIF) network. Interacts with KRT6A to form filaments. Strongly expressed in skin and scalp, and weak expression observed in thymus and tongue. In the hair follicle, expressed in Henle layer, Huxley layer and in the inner root sheath cuticle of the hair follicle. Expression extends from the bulb region up to the point of differentiation into the three layers. Also present in the medulla of beard hair (at protein level).

It localises to the cytoplasm. Essential for the proper assembly of type I and type II keratin protein complexes and formation of keratin intermediate filaments in the inner root sheath (irs). Plays a role in the cytoskeleton organization. The polypeptide is Keratin, type I cytoskeletal 25 (Homo sapiens (Human)).